Consider the following 177-residue polypeptide: ATP synthase subunit delta (177 aa).

This sequence belongs to the ATPase delta chain family. As to quaternary structure, F-type ATPases have 2 components, F(1) - the catalytic core - and F(0) - the membrane proton channel. F(1) has five subunits: alpha(3), beta(3), gamma(1), delta(1), epsilon(1). F(0) has three main subunits: a(1), b(2) and c(10-14). The alpha and beta chains form an alternating ring which encloses part of the gamma chain. F(1) is attached to F(0) by a central stalk formed by the gamma and epsilon chains, while a peripheral stalk is formed by the delta and b chains.

The protein resides in the cell inner membrane. F(1)F(0) ATP synthase produces ATP from ADP in the presence of a proton or sodium gradient. F-type ATPases consist of two structural domains, F(1) containing the extramembraneous catalytic core and F(0) containing the membrane proton channel, linked together by a central stalk and a peripheral stalk. During catalysis, ATP synthesis in the catalytic domain of F(1) is coupled via a rotary mechanism of the central stalk subunits to proton translocation. In terms of biological role, this protein is part of the stalk that links CF(0) to CF(1). It either transmits conformational changes from CF(0) to CF(1) or is implicated in proton conduction. The chain is ATP synthase subunit delta from Klebsiella pneumoniae subsp. pneumoniae (strain ATCC 700721 / MGH 78578).